Consider the following 407-residue polypeptide: Keratin, type I cuticular Ha2 (407 aa).

Positions 1–55 are head; the sequence is MPSVCMPTTYRPASCLSKTYLSSSCQPSNRRPTGCISSSMGTYGLFCEGAFNGNE. Positions 55–366 constitute an IF rod domain; it reads EKETMQVLND…GLLESEDSKL (312 aa). Positions 56–90 are coil 1A; it reads KETMQVLNDRLANYLEKVRQLEKENAELEGKIQDV. Residues 91-101 are linker 1; that stretch reads YQGQVLTMCPD. The coil 1B stretch occupies residues 102 to 202; that stretch reads YQSYFQTIEE…HEEEVGVLRQ (101 aa). The tract at residues 203–218 is linker 12; sequence QLGDRLNIEVDAAPPV. Residues 219–362 are coil 2; sequence DLTRMLEEMR…DTYRGLLESE (144 aa). The tail stretch occupies residues 363–407; the sequence is DSKLPCNPCSTPSCQPCAPSPGVSRTVCVPHTVCVPCSPCLQTRY.

It belongs to the intermediate filament family. As to expression, cuticle of the hair shaft.

In Mus musculus (Mouse), this protein is Keratin, type I cuticular Ha2 (Krt32).